Reading from the N-terminus, the 142-residue chain is Small ribosomal subunit protein uS9c (142 aa).

It belongs to the universal ribosomal protein uS9 family.

It localises to the plastid. It is found in the chloroplast. This chain is Small ribosomal subunit protein uS9c (rps9), found in Stigeoclonium helveticum (Green alga).